The sequence spans 432 residues: Peptidase B (432 aa).

Lys-196 and Asp-201 together coordinate Mn(2+). Residue Lys-208 is part of the active site. Residues Asp-219, Asp-278, and Glu-280 each contribute to the Mn(2+) site. The active site involves Arg-282.

The protein belongs to the peptidase M17 family. In terms of assembly, homohexamer. Requires Mn(2+) as cofactor.

Its subcellular location is the cytoplasm. The catalysed reaction is Release of an N-terminal amino acid, Xaa, from a peptide or arylamide. Xaa is preferably Glu or Asp but may be other amino acids, including Leu, Met, His, Cys and Gln.. In terms of biological role, probably plays an important role in intracellular peptide degradation. This Vibrio vulnificus (strain CMCP6) protein is Peptidase B.